The sequence spans 329 residues: Vitamin B12 import system permease protein BtuC (329 aa).

The next 9 helical transmembrane spans lie at 18–38 (WLLS…CAGE), 64–84 (LAVL…QALF), 91–111 (PGLL…VLLG), 115–135 (LPGW…TLIL), 149–169 (LLAG…AIYF), 191–208 (WQQS…IWIC), 243–263 (GWMV…GLVI), 277–297 (VLLP…DVVA), and 305–325 (ELPI…WLLL).

Belongs to the binding-protein-dependent transport system permease family. FecCD subfamily. In terms of assembly, the complex is composed of two ATP-binding proteins (BtuD), two transmembrane proteins (BtuC) and a solute-binding protein (BtuF).

It is found in the cell inner membrane. Its function is as follows. Part of the ABC transporter complex BtuCDF involved in vitamin B12 import. Involved in the translocation of the substrate across the membrane. The chain is Vitamin B12 import system permease protein BtuC from Salmonella arizonae (strain ATCC BAA-731 / CDC346-86 / RSK2980).